The chain runs to 225 residues: 3-dehydroquinate dehydratase (225 aa).

3-dehydroquinate-binding positions include serine 6, 30 to 32 (EWR), and arginine 62. Histidine 118 functions as the Proton donor/acceptor in the catalytic mechanism. The Schiff-base intermediate with substrate role is filled by lysine 143. The 3-dehydroquinate site is built by arginine 186, serine 205, and glutamine 209.

This sequence belongs to the type-I 3-dehydroquinase family. As to quaternary structure, homodimer.

It carries out the reaction 3-dehydroquinate = 3-dehydroshikimate + H2O. Its pathway is metabolic intermediate biosynthesis; chorismate biosynthesis; chorismate from D-erythrose 4-phosphate and phosphoenolpyruvate: step 3/7. In terms of biological role, involved in the third step of the chorismate pathway, which leads to the biosynthesis of aromatic amino acids. Catalyzes the cis-dehydration of 3-dehydroquinate (DHQ) and introduces the first double bond of the aromatic ring to yield 3-dehydroshikimate. The polypeptide is 3-dehydroquinate dehydratase (Streptococcus pneumoniae (strain ATCC 700669 / Spain 23F-1)).